A 282-amino-acid chain; its full sequence is Cell division protein FtsQ (282 aa).

The Cytoplasmic portion of the chain corresponds to 1–30; the sequence is MINIGPPKKRRLRRKGNRFKKTRRVIPWRR. Residues 31–51 form a helical membrane-spanning segment; the sequence is LMIGALWGTMALASLGMVVAV. Over 52 to 282 the chain is Periplasmic; the sequence is ACFAGQMLFA…LDAGELRGKG (231 aa). The POTRA domain occupies 65-133; it reads FKVERIQVEN…DQLVIRVDER (69 aa).

The protein belongs to the FtsQ/DivIB family. FtsQ subfamily.

The protein localises to the cell inner membrane. Essential cell division protein. The protein is Cell division protein FtsQ of Syntrophotalea carbinolica (strain DSM 2380 / NBRC 103641 / GraBd1) (Pelobacter carbinolicus).